Reading from the N-terminus, the 299-residue chain is Coenzyme PQQ synthesis protein B (299 aa).

The protein belongs to the PqqB family.

Its pathway is cofactor biosynthesis; pyrroloquinoline quinone biosynthesis. Functionally, may be involved in the transport of PQQ or its precursor to the periplasm. This chain is Coenzyme PQQ synthesis protein B, found in Methylobacterium nodulans (strain LMG 21967 / CNCM I-2342 / ORS 2060).